The following is an 82-amino-acid chain: Ubiquinol-cytochrome-c reductase complex assembly factor 3 (82 aa).

Over 1-6 (METVRR) the chain is Mitochondrial matrix. A helical membrane pass occupies residues 7–29 (IVKGTLLLGFCTGIGGDLWVLVA). At 30 to 82 (PGQERRLEMRMNYPEANPPMLAEAHKRNEMVLKVIEESAKTNENMARRSPWSS) the chain is on the mitochondrial intermembrane side.

The protein belongs to the UQCC3 family. In terms of assembly, associates with the ubiquinol-cytochrome c reductase complex (mitochondrial respiratory chain complex III or cytochrome b-c1 complex).

It localises to the mitochondrion inner membrane. Required for the assembly of the ubiquinol-cytochrome c reductase complex (mitochondrial respiratory chain complex III or cytochrome b-c1 complex), mediating cytochrome b recruitment and probably stabilization within the complex. Thereby, plays an important role in ATP production by mitochondria. Cardiolipin-binding protein, it may also control the cardiolipin composition of mitochondria membranes and their morphology. The chain is Ubiquinol-cytochrome-c reductase complex assembly factor 3 from Xenopus laevis (African clawed frog).